The chain runs to 432 residues: Adenylosuccinate synthetase (432 aa).

Residues glycine 13 to lysine 19 and glycine 41 to threonine 43 each bind GTP. The active-site Proton acceptor is aspartate 14. Mg(2+)-binding residues include aspartate 14 and glycine 41. Residues aspartate 14–lysine 17, asparagine 39–histidine 42, threonine 130, arginine 144, glutamine 225, threonine 240, and arginine 304 contribute to the IMP site. Histidine 42 serves as the catalytic Proton donor. Alanine 300–arginine 306 is a substrate binding site. Residues arginine 306, lysine 332–aspartate 334, and serine 415–glycine 417 contribute to the GTP site.

The protein belongs to the adenylosuccinate synthetase family. As to quaternary structure, homodimer. It depends on Mg(2+) as a cofactor.

It is found in the cytoplasm. It carries out the reaction IMP + L-aspartate + GTP = N(6)-(1,2-dicarboxyethyl)-AMP + GDP + phosphate + 2 H(+). Its pathway is purine metabolism; AMP biosynthesis via de novo pathway; AMP from IMP: step 1/2. Functionally, plays an important role in the de novo pathway of purine nucleotide biosynthesis. Catalyzes the first committed step in the biosynthesis of AMP from IMP. This is Adenylosuccinate synthetase from Haemophilus influenzae (strain PittEE).